The sequence spans 20 residues: DELTA-actitoxin-Afr1b (20 aa).

Belongs to the actinoporin family. Sea anemone subfamily. Octamer or nonamer in membranes. Monomer in the soluble state.

It is found in the secreted. Its subcellular location is the nematocyst. The protein resides in the target cell membrane. Its function is as follows. Pore-forming toxin (PFT) that consists of a crown-shaped octamer or nonamer that forms cation-selective hydrophilic pores of about 1.5 nm (inside) and 13 nm (outside) and causes cytolysis. It causes cardiac stimulation. Also causes hemolysis (HC(50)=0.4 nM). Interestingly, the Phe-16 is crucial for hemolysis. Pore formation is a multi-step process that involves specific recognition of membrane sphingomyelin (but neither cholesterol nor phosphatidylcholine) using aromatic rich region and adjacent phosphocholine (POC) binding site, firm binding to the membrane (mainly driven by hydrophobic interactions) accompanied by the transfer of the N-terminal region to the lipid-water interface and finally pore formation after oligomerization of monomers. It is probable that a dimeric form is an assembly intermediate before the complete oligomerization. The formation of stable pores occurs only in vesicles composed of DOPC/SM (there is no oligomerization when the PFT is treated with vesicles of DOPC or SM alone). The transmembrane pore displays 8 lateral perforations, one at each subunit-subunit interface, partially occupied by the acyl-chain region of a bridging lipid. Each pore contains 24 lipid molecules, firmly bound to each subunit, that is, 3 lipids (L1, L2, L3, L4 and/or L5) are associated to each subunit. Lipid L1 bridges 2 subunits, whereas lipids L2 and L3 bind to sites at single subunit. The polypeptide is DELTA-actitoxin-Afr1b (Actinia fragacea (Strawberry anemone)).